A 315-amino-acid chain; its full sequence is GTP cyclohydrolase MptA (315 aa).

This sequence belongs to the GTP cyclohydrolase IV family. Homodimer. It depends on Fe(2+) as a cofactor.

It catalyses the reaction GTP + H2O = 7,8-dihydroneopterin 2',3'-cyclic phosphate + formate + diphosphate + H(+). It functions in the pathway cofactor biosynthesis; 5,6,7,8-tetrahydromethanopterin biosynthesis. Its function is as follows. Converts GTP to 7,8-dihydro-D-neopterin 2',3'-cyclic phosphate, the first intermediate in the biosynthesis of coenzyme methanopterin. This chain is GTP cyclohydrolase MptA, found in Methanococcus maripaludis (strain DSM 14266 / JCM 13030 / NBRC 101832 / S2 / LL).